Consider the following 201-residue polypeptide: Guanylate kinase (201 aa).

The 180-residue stretch at 7-186 folds into the Guanylate kinase-like domain; the sequence is GVLLVLSSPS…SVEEISSILN (180 aa). Residue 14-21 coordinates ATP; the sequence is SPSGAGKT.

This sequence belongs to the guanylate kinase family.

The protein resides in the cytoplasm. The catalysed reaction is GMP + ATP = GDP + ADP. Its function is as follows. Essential for recycling GMP and indirectly, cGMP. The sequence is that of Guanylate kinase from Wolbachia pipientis wMel.